The primary structure comprises 402 residues: Multidrug resistance protein MdtH (402 aa).

Topologically, residues 1–12 (MSRVSQARNLGK) are cytoplasmic. The helical transmembrane segment at 13 to 33 (YFLLIDNMLVVLGFFVVFPLI) threads the bilayer. Residues 34-98 (SIRFVDQMGW…GFATMGIAHE (65 aa)) are Periplasmic-facing. The helical transmembrane segment at 99–116 (PWLLWFSCFLSGLGGTLF) threads the bilayer. The Cytoplasmic portion of the chain corresponds to 117–138 (DPPRSALVVKLIRPEQRGRFFS). A helical transmembrane segment spans residues 139–159 (LLMMQDSAGAVIGALLGSWLL). Residues 160-164 (QYDFR) lie on the Periplasmic side of the membrane. A helical membrane pass occupies residues 165-185 (LVCATGAILFILCALFNAWLL). The Cytoplasmic segment spans residues 186 to 213 (PAWKLSTVRTPVREGMRRVMSDKRFVTY). A helical membrane pass occupies residues 214–234 (VLTLAGYYMLAVQVMLMLPIM). The Periplasmic portion of the chain corresponds to 235–243 (VNDIAGSPA). A helical membrane pass occupies residues 244–264 (AVKWMYAIEACLSLTLLYPIA). Residues 265 to 276 (RWSEKRFRLEHR) lie on the Cytoplasmic side of the membrane. The chain crosses the membrane as a helical span at residues 277-297 (LMAGLLVMSLSMLPIGMVGNL). Residues 298–299 (QQ) lie on the Periplasmic side of the membrane. Residues 300-320 (LFTLICAFYIGSVIAEPARET) traverse the membrane as a helical segment. Residues 321 to 339 (LSASLADARARGSYMGFSR) are Cytoplasmic-facing. Residues 340–360 (LGLAIGGAIGYIGGGWLFDMG) form a helical membrane-spanning segment. The Periplasmic segment spans residues 361-367 (KALAQPE). The chain crosses the membrane as a helical span at residues 368–388 (LPWMMLGIIGFITFLALGWQF). The Cytoplasmic segment spans residues 389-402 (SHKRTPRRMLEPGA).

This sequence belongs to the major facilitator superfamily. DHA1 family. MdtH (TC 2.A.1.2.21) subfamily.

Its subcellular location is the cell inner membrane. The chain is Multidrug resistance protein MdtH from Salmonella agona (strain SL483).